Here is a 343-residue protein sequence, read N- to C-terminus: Methionine import ATP-binding protein MetN (343 aa).

One can recognise an ABC transporter domain in the interval 2–241 (IKLSNITKVF…PKTPLAQKFI (240 aa)). 38–45 (GASGAGKS) contacts ATP.

This sequence belongs to the ABC transporter superfamily. Methionine importer (TC 3.A.1.24) family. As to quaternary structure, the complex is composed of two ATP-binding proteins (MetN), two transmembrane proteins (MetI) and a solute-binding protein (MetQ).

The protein resides in the cell inner membrane. It carries out the reaction L-methionine(out) + ATP + H2O = L-methionine(in) + ADP + phosphate + H(+). The catalysed reaction is D-methionine(out) + ATP + H2O = D-methionine(in) + ADP + phosphate + H(+). Part of the ABC transporter complex MetNIQ involved in methionine import. Responsible for energy coupling to the transport system. The chain is Methionine import ATP-binding protein MetN from Escherichia coli O157:H7.